The sequence spans 408 residues: Alpha-2Da adrenergic receptor (408 aa).

Residues 1-30 (MSVTPTANSTEEAANITASPRLWPYTEPAS) lie on the Extracellular side of the membrane. N-linked (GlcNAc...) asparagine glycosylation is found at asparagine 8 and asparagine 15. The helical transmembrane segment at 31–55 (AIIILVVSLIILLTIVGNVLVIVAV) threads the bilayer. Topologically, residues 56-67 (LTSRALRAPQNL) are cytoplasmic. Residues 68–93 (FLVSLACADILVATLVIPFSLANEIM) form a helical membrane-spanning segment. The Extracellular portion of the chain corresponds to 94 to 103 (GYWYFGSTWC). Cysteine 103 and cysteine 176 are joined by a disulfide. The helical transmembrane segment at 104-126 (AFYLALDVLFCTSSIVHLCAISL) threads the bilayer. At 127–147 (DRYWSVTKAVRYNLKRTPRRI) the chain is on the cytoplasmic side. A helical membrane pass occupies residues 148-170 (KCMIAVVWLISAVISFPPLIMTK). Topologically, residues 171-181 (HDEKECLINDE) are extracellular. A helical membrane pass occupies residues 182 to 205 (TWYILSSCAVSFFAPGLIMITVYC). At 206-332 (KIYRVAKQRS…QMREKRFTFV (127 aa)) the chain is on the cytoplasmic side. Residues 242 to 306 (FEKESPSSNS…SCRVSWAAHQ (65 aa)) are disordered. Residues 260–270 (ELDDIDLEESA) show a composition bias toward acidic residues. Basic residues predominate over residues 277–286 (RGSRFSKRRR). Residues 333–356 (LAVVMGVFVLCWFPFFFTYSLQAV) form a helical membrane-spanning segment. Residues 357-369 (CGERCGPPEALFK) are Extracellular-facing. The chain crosses the membrane as a helical span at residues 370-390 (LFFWIGYCNSSVNPIIYTIFN). Residues 391–408 (RDFRKAFKKVVCWSAQRT) lie on the Cytoplasmic side of the membrane.

This sequence belongs to the G-protein coupled receptor 1 family. Adrenergic receptor subfamily. ADRA2D sub-subfamily.

The protein resides in the cell membrane. Its function is as follows. Alpha-2 adrenergic receptors mediate the catecholamine-induced inhibition of adenylate cyclase through the action of G proteins. The order of potency for this receptor is dexmedetomidine &gt; norepinephrine &gt; epinephrine &gt; oxymetazoline. This is Alpha-2Da adrenergic receptor (adra2da) from Danio rerio (Zebrafish).